The primary structure comprises 626 residues: tRNA uridine 5-carboxymethylaminomethyl modification enzyme MnmG (626 aa).

13 to 18 (GGGHAG) contributes to the FAD binding site. 273–287 (GPRYCPSIEDKIHRF) is a binding site for NAD(+).

This sequence belongs to the MnmG family. In terms of assembly, homodimer. Heterotetramer of two MnmE and two MnmG subunits. Requires FAD as cofactor.

It localises to the cytoplasm. In terms of biological role, NAD-binding protein involved in the addition of a carboxymethylaminomethyl (cmnm) group at the wobble position (U34) of certain tRNAs, forming tRNA-cmnm(5)s(2)U34. The chain is tRNA uridine 5-carboxymethylaminomethyl modification enzyme MnmG from Acinetobacter baylyi (strain ATCC 33305 / BD413 / ADP1).